The chain runs to 2227 residues: Genome polyprotein (2227 aa).

2 short sequence motifs ((L)YPX(n)L motif) span residues 167–171 and 200–205; these read YPHGL and YPVWEL. An involved in P1-2A pentamerization region spans residues 766 to 836; the sequence is MMSRIAAGDL…PRKKKGLFSQ (71 aa). A helical transmembrane segment spans residues 1010–1030; that stretch reads VTVEIINTVLCFVKSGILLYV. Residues 1043-1070 are membrane-penetrating ability; sequence IGLLRVMNYVDIGCSVISCGKVFSKMLE. A coiled-coil region spans residues 1127 to 1152; that stretch reads KKKDILNILKDNQQKIEKAIEEADKF. Residues 1204–1366 enclose the SF3 helicase domain; the sequence is HQKLKNLGSI…SFSKNPHNDM (163 aa). Residue 1230-1237 participates in ATP binding; the sequence is GKRGGGKS. Residues 1462–1482 traverse the membrane as a helical segment; the sequence is WVAVGAAVGILGVLVGGWFVY. Y1499 carries the post-translational modification O-(5'-phospho-RNA)-tyrosine. The region spanning 1514 to 1728 is the Peptidase C3 domain; that stretch reads DPVESQSTLE…VAKLVTQEMF (215 aa). Catalysis depends on for protease 3C activity residues H1563, D1603, and C1691. The 122-residue stretch at 1976-2097 folds into the RdRp catalytic domain; that stretch reads DVGLDLDFSA…VFSRDVQIDN (122 aa).

It belongs to the picornaviridae polyprotein family. As to quaternary structure, homodimer. Homomultimer; probably interacts with membranes in a multimeric form. Seems to assemble into amyloid-like fibers. In terms of assembly, homodimer. Monomer. Interacts with protein 3CD. Interacts with host ACBD3. As to quaternary structure, interacts with protein 3AB. In terms of assembly, interacts with human MAVS. Homodimer; disulfide-linked. As to quaternary structure, homopentamer. Homooligomer. In terms of assembly, interacts with capsid protein VP2. Interacts with capsid protein VP3. Interacts with capsid protein VP1. Interacts with capsid protein VP3. As to quaternary structure, interacts with capsid protein VP1. Interacts with capsid protein VP2. Post-translationally, specific enzymatic cleavages by viral protease in vivo yield a variety of precursors and mature proteins. Polyprotein processing intermediates are produced, such as P1-2A which is a functional precursor of the structural proteins, VP0 which is a VP4-VP2 precursor, VP1-2A precursor, 3ABC precursor which is a stable and catalytically active precursor of 3A, 3B and 3C proteins, 3AB and 3CD precursors. The assembly signal 2A is removed from VP1-2A by a host protease, possibly host Cathepsin L. This cleavage occurs over a region of 3 amino-acids probably generating VP1 proteins with heterogeneous C-termini. In terms of processing, during virion maturation, immature virions are rendered infectious following cleavage of VP0 into VP4 and VP2. This maturation seems to be an autocatalytic event triggered by the presence of RNA in the capsid and is followed by a conformational change of the particle. The assembly signal 2A is removed from VP1-2A by a host protease, possibly host Cathepsin L in naked virions. This cleavage does not occur in enveloped virions. This cleavage occurs over a region of 3 amino-acids probably generating VP1 proteins with heterogeneous C-termini. Post-translationally, VPg is uridylylated prior to priming replication into VPg-pUpU. In terms of processing, unlike other picornaviruses, does not seem to be myristoylated.

Its subcellular location is the virion. The protein resides in the host endosome. The protein localises to the host multivesicular body. It localises to the host membrane. It is found in the host mitochondrion outer membrane. Its subcellular location is the host cytoplasm. The protein resides in the host cytoplasmic vesicle membrane. The enzyme catalyses RNA(n) + a ribonucleoside 5'-triphosphate = RNA(n+1) + diphosphate. The catalysed reaction is a ribonucleoside 5'-triphosphate + H2O = a ribonucleoside 5'-diphosphate + phosphate + H(+). It catalyses the reaction Selective cleavage of Gln-|-Gly bond in the poliovirus polyprotein. In other picornavirus reactions Glu may be substituted for Gln, and Ser or Thr for Gly.. In terms of biological role, capsid proteins VP1, VP2, and VP3 form a closed capsid enclosing the viral positive strand RNA genome. All these proteins contain a beta-sheet structure called beta-barrel jelly roll. Together they form an icosahedral capsid (T=3) composed of 60 copies of each VP1, VP2, and VP3, with a diameter of approximately 300 Angstroms. VP1 is situated at the 12 fivefold axes, whereas VP2 and VP3 are located at the quasi-sixfold axes. The naked capsid interacts with the host receptor HAVCR1 to provide virion attachment to and probably entry into the target cell. Functionally, VP0 precursor is a component of the immature procapsids. Plays a role in the assembly of the 12 pentamers into an icosahedral structure. Has not been detected in mature virions, supposedly owing to its small size. Its function is as follows. Precursor component of immature procapsids that corresponds to an extended form of the structural protein VP1. After maturation, possibly by the host Cathepsin L, the assembly signal 2A is cleaved to give rise to the mature VP1 protein. In terms of biological role, functions as a viroporin. Affects membrane integrity and causes an increase in membrane permeability. Involved in host intracellular membrane rearrangements probably to give rise to the viral factories. Does not disrupt calcium homeostasis or glycoprotein trafficking. Antagonizes the innate immune response of the host by suppressing IFN-beta synthesis, which it achieves by interfering with the RIG-I/IFIH1 pathway. Functionally, affects membrane integrity and causes an increase in membrane permeability. Associates with and induces structural rearrangements of intracellular membranes. Displays RNA-binding activity. Its function is as follows. The precursor 3ABC is targeted to the mitochondrial membrane where protease 3C activity cleaves and inhibits the host antiviral protein MAVS, thereby disrupting activation of IRF3 through the IFIH1/MDA5 pathway. In vivo, the protease activity of 3ABC precursor is more efficient in cleaving the 2BC precursor than that of protein 3C. The 3ABC precursor may therefore play a role in the proteolytic processing of the polyprotein. Possible viroporin. In terms of biological role, interacts with the 3CD precursor and with RNA structures found at both the 5'- and 3'-termini of the viral genome. Since the 3AB precursor contains the hydrophobic domain 3A, it probably anchors the whole viral replicase complex to intracellular membranes on which viral RNA synthesis occurs. Functionally, may serve as membrane anchor to the 3AB and 3ABC precursors via its hydrophobic domain. May interact with RNA. Acts as a primer for viral RNA replication and remains covalently bound to viral genomic RNA. VPg is uridylylated prior to priming replication into VPg-pUpU. The VPg-pUpU is then used as primer on the genomic RNA poly(A) by the RNA-dependent RNA polymerase to replicate the viral genome. Its function is as follows. Cysteine protease that generates mature viral proteins from the precursor polyprotein. In addition to its proteolytic activity, it binds to viral RNA, and thus influences viral genome replication. RNA and substrate bind cooperatively to the protease. Cleaves IKBKG/NEMO to impair innate immune signaling. Cleaves host PABPC1 which may participate in the switch of viral translation to RNA synthesis. In terms of biological role, interacts with the 3AB precursor and with RNA structures found at both the 5'- and 3'-termini of the viral genome. Disrupts TLR3 signaling by degrading the host adapter protein TICAM1/TRIF. Functionally, replicates genomic and antigenomic RNA by recognizing replications specific signals. This chain is Genome polyprotein, found in Cercopithecus hamlyni (Owl-faced monkey).